The following is a 130-amino-acid chain: Small ribosomal subunit protein uS11 (130 aa).

It belongs to the universal ribosomal protein uS11 family. In terms of assembly, part of the 30S ribosomal subunit. Interacts with proteins S7 and S18. Binds to IF-3.

In terms of biological role, located on the platform of the 30S subunit, it bridges several disparate RNA helices of the 16S rRNA. Forms part of the Shine-Dalgarno cleft in the 70S ribosome. The sequence is that of Small ribosomal subunit protein uS11 from Shewanella denitrificans (strain OS217 / ATCC BAA-1090 / DSM 15013).